Here is a 133-residue protein sequence, read N- to C-terminus: Endoribonuclease YbeY (133 aa).

Residues His105, His109, and His115 each contribute to the Zn(2+) site.

This sequence belongs to the endoribonuclease YbeY family. Zn(2+) is required as a cofactor.

Its subcellular location is the cytoplasm. Single strand-specific metallo-endoribonuclease involved in late-stage 70S ribosome quality control and in maturation of the 3' terminus of the 16S rRNA. The chain is Endoribonuclease YbeY from Lawsonia intracellularis (strain PHE/MN1-00).